Reading from the N-terminus, the 184-residue chain is Photosynthetic apparatus regulatory protein RegA (184 aa).

Residues 14-128 (SLLLVDDDNA…DITNALLAKG (115 aa)) enclose the Response regulatory domain. The residue at position 63 (Asp-63) is a 4-aspartylphosphate.

Phosphorylated by RegB.

Its function is as follows. Member of the two-component regulatory system RegB/RegA. Involved in transactivating anaerobic expression of the photosynthetic apparatus. It is a transcriptional regulator that is responsible for activating expression of the puf, puh, and puc operons in response to a decrease in oxygen tension. The protein is Photosynthetic apparatus regulatory protein RegA (regA) of Rhodobacter capsulatus (Rhodopseudomonas capsulata).